The sequence spans 260 residues: Movement protein (260 aa).

The interval 230–260 is disordered; sequence SGDTAEEAGEASSGEPHWVPEATAPRVRKAT.

Transports viral genome to neighboring plant cells directly through plasmosdesmata, without any budding. The movement protein allows efficient cell to cell propagation, by bypassing the host cell wall barrier. Might act by forming tubules structures that increase the size exclusion limit (SEL) of plasmodesmata, thereby allowing viral ribonucleoproteins to spread directly to neighboring cells. Binds to ssRNA. The chain is Movement protein from Groundnut rosette virus (strain MC1) (GRV).